A 203-amino-acid chain; its full sequence is ATP phosphoribosyltransferase (203 aa).

The protein belongs to the ATP phosphoribosyltransferase family. Short subfamily.

It is found in the cytoplasm. The catalysed reaction is 1-(5-phospho-beta-D-ribosyl)-ATP + diphosphate = 5-phospho-alpha-D-ribose 1-diphosphate + ATP. Its pathway is amino-acid biosynthesis; L-histidine biosynthesis; L-histidine from 5-phospho-alpha-D-ribose 1-diphosphate: step 1/9. Its function is as follows. Catalyzes the condensation of ATP and 5-phosphoribose 1-diphosphate to form N'-(5'-phosphoribosyl)-ATP (PR-ATP). Has a crucial role in the pathway because the rate of histidine biosynthesis seems to be controlled primarily by regulation of HisG enzymatic activity. This chain is ATP phosphoribosyltransferase, found in Thermococcus kodakarensis (strain ATCC BAA-918 / JCM 12380 / KOD1) (Pyrococcus kodakaraensis (strain KOD1)).